A 151-amino-acid polypeptide reads, in one-letter code: SsrA-binding protein (151 aa).

This sequence belongs to the SmpB family.

Its subcellular location is the cytoplasm. Required for rescue of stalled ribosomes mediated by trans-translation. Binds to transfer-messenger RNA (tmRNA), required for stable association of tmRNA with ribosomes. tmRNA and SmpB together mimic tRNA shape, replacing the anticodon stem-loop with SmpB. tmRNA is encoded by the ssrA gene; the 2 termini fold to resemble tRNA(Ala) and it encodes a 'tag peptide', a short internal open reading frame. During trans-translation Ala-aminoacylated tmRNA acts like a tRNA, entering the A-site of stalled ribosomes, displacing the stalled mRNA. The ribosome then switches to translate the ORF on the tmRNA; the nascent peptide is terminated with the 'tag peptide' encoded by the tmRNA and targeted for degradation. The ribosome is freed to recommence translation, which seems to be the essential function of trans-translation. The chain is SsrA-binding protein from Lactobacillus acidophilus (strain ATCC 700396 / NCK56 / N2 / NCFM).